The sequence spans 798 residues: MSRRRQFDDEDEVQMKRRRGAPLIEDVEKKLQGVIGKVGENTGSSIECNLDKLTAFLHDDLEKYRASIIDIIAGCAIYLPNRVTVYTTLVGLLNSKNFNFGGDVVEKLISEQQDLLSKQKYQEAQNLAIFLCDLGNSGVLTAQSIGEYLESFIAAAFEENMPQVRNDYYIQTVLRCLPWIGKELTEKAPEQMENIGEAIGKYLELRNKNHVALLQVWREGSTDQKQEDYLESLSAQIEALRNADWVENHIPRHYSGFETTLQDALQHNLPSFQSPEHTSDMIYPYPLVVFRLFQDADCSAFSSKPLPGDSSIDRFLFEGEIAWIIEKNQFNRKACARELLAFAEENPSVPIGFLIFETIFGQMLRLPHAPYPAIFHCSLVLELLKLKPDDYPQILVQTVECIYRRADSMQPVCIDRMVDWFSFHLSNFQYRYTWTDWKDCLNKDAFSGSQIFVREVIEKCRRFGSYEKIIAALPQDFVKIHPCSPEVRYLIDEEDTALVQRAETFTQMFQERQPAEAFLNELKSNDENDELPYNINEFGLFVMVMLKMASKTYSHNFSALFRYQTTLKTVCDASELYQEKLLETLYSCWKTNQQMLMILTDKLLKMQVIDCSAVVGWLFDEKMWQEHDRQWLFEVLNQALEKLTRQINVVEKDIKELTEKTENKIKEEDDEESDIKMDEDETKEEKFKQDLEDLENNKEKLERMVTFQKGLFNDFLIAFIEEIKNAATSNTSEMDGSGDTPGTQTPKFMWLRGRFCHVLLAHAETLLKHSSNIADEVFSEGTDPSIIECFNQFQSLRL.

The region spanning 28–241 is the MIF4G domain; sequence EKKLQGVIGK…SLSAQIEALR (214 aa). Residues 663-686 form a disordered region; the sequence is NKIKEEDDEESDIKMDEDETKEEK. The span at 668 to 682 shows a compositional bias: acidic residues; it reads EDDEESDIKMDEDET.

It belongs to the NCBP1 family. In terms of assembly, component of the nuclear cap-binding complex (CBC), a heterodimer composed of ncbp-1 and ncbp-1 that interacts with m7GpppG-capped RNA.

The protein resides in the nucleus. Functionally, component of the cap-binding complex (CBC), which binds cotranscriptionally to the 5'-cap of pre-mRNAs and is involved in various processes such as pre-mRNA splicing and RNA-mediated gene silencing (RNAi). The CBC complex is involved in miRNA-mediated RNA interference and is required for primary microRNAs (miRNAs) processing. In the CBC complex, ncbp-1 does not bind directly capped RNAs (m7GpppG-capped RNA) but is required to stabilize the movement of the N-terminal loop of ncbp-2 and lock the CBC into a high affinity cap-binding state with the cap structure. This Caenorhabditis elegans protein is Nuclear cap-binding protein subunit 1 (ncbp-1).